The chain runs to 56 residues: AVDDYAATRYPIILVHGLTTDSKYGGVVEYXYRNPNDLTSHXXAAYVYELRSDPLD.

This sequence belongs to the AB hydrolase superfamily. Pseudomonas lipase family.

It carries out the reaction a triacylglycerol + H2O = a diacylglycerol + a fatty acid + H(+). In terms of biological role, this thermostable and solvent-tolerant lipase is rather nonspecific. It can synthesize both primary and secondary alcohol esters. Simple triglycerides of short and middle chain fatty acids (C&lt;13) are the preferred substrates. In Burkholderia cepacia (Pseudomonas cepacia), this protein is Lipase, thermostable.